The primary structure comprises 495 residues: MDAPMEDAPAPVAQVKVIFTTTEPDLELPESKRQLLVPADIRRYGLSRILNSESMLDTGSIPFDFLINGSFLRSSLEDYLTSNGLSLETTLTLQYVRSLIPPVYEASFEHDDWVSAVDVLSATSPAGRWSSAANSSAAVQPGQERVLSASYDGLLRIWNASGSVIATSPSGSHGGHTASIKAAKFLTSDRLASAGMDRTVRVWKYTESDHFTGELKPTLELYGHTGSVDWLDVDGHSKHILTASADGAIGFWSASKASAPEPDASLLPGAHVSKRRKATSSVSTAQRGPLGLWSIHTAPATAAIFDPRDRTVAYSASQDHTVRTLDLTTGQVVSTLTLTHPLLSLSALTRAGTTSPLLAAGTSARHITMVDPRASSATTSVMTLRGHANKVVSLSPSPENEYSLVSGSHDGTCRVWDLRSVRPATKEEGSLGGVSEPVYVIERESWASKGKKKRPVAGDGCKVFSVVWDKLGIFSGGEDKKVQVNRGRNIVTEQK.

A ubiquitin-like (UBL) domain region spans residues 15-97 (VKVIFTTTEP…ETTLTLQYVR (83 aa)). 7 WD repeats span residues 129–168 (WSSA…IATS), 175–213 (GHTA…HFTG), 223–262 (GHTG…APEP), 264–295 (ASLL…LWSI), 296–337 (HTAP…STLT), 386–426 (GHAN…PATK), and 458–495 (GDGC…TEQK).

The protein belongs to the WD repeat WDR12/YTM1 family. Component of the NOP7 complex, composed of ERB1, NOP7 and YTM1. The complex is held together by ERB1, which interacts with NOP7 via its N-terminal domain and with YTM1 via a high-affinity interaction between the seven-bladed beta-propeller domains of the 2 proteins. The NOP7 complex associates with the 66S pre-ribosome. Interacts (via UBL domain) with MDN1 (via VWFA/MIDAS domain).

It localises to the nucleus. The protein resides in the nucleolus. It is found in the nucleoplasm. Component of the NOP7 complex, which is required for maturation of the 25S and 5.8S ribosomal RNAs and formation of the 60S ribosome. This chain is Ribosome biogenesis protein YTM1, found in Chaetomium thermophilum (strain DSM 1495 / CBS 144.50 / IMI 039719) (Thermochaetoides thermophila).